Reading from the N-terminus, the 167-residue chain is Homing endonuclease I-ApeII (167 aa).

The protein belongs to the LAGLIDADG endonuclease family.

Its function is as follows. Endonuclease involved in rRNA intron I-gamma homing. The sequence is that of Homing endonuclease I-ApeII (apeII) from Aeropyrum pernix (strain ATCC 700893 / DSM 11879 / JCM 9820 / NBRC 100138 / K1).